The sequence spans 185 residues: MSEKNVLDENSKNILLDSIRTINDYPKPGIIFKDITTLLNNKNAFNLLMDHLEERYKSYNLDYIAGVEARGFFFASALASRLKIGFVPVRKKGKLPSTTICEKYELEYGFSEVELHLDAFNNEKNVNVLLIDDIIVSGGTAYAAANLIKKLNVNLVESCFLMNIAILDGAKKLSEISPVYCVLEI.

The protein belongs to the purine/pyrimidine phosphoribosyltransferase family. As to quaternary structure, homodimer.

The protein localises to the cytoplasm. It carries out the reaction AMP + diphosphate = 5-phospho-alpha-D-ribose 1-diphosphate + adenine. The protein operates within purine metabolism; AMP biosynthesis via salvage pathway; AMP from adenine: step 1/1. Catalyzes a salvage reaction resulting in the formation of AMP, that is energically less costly than de novo synthesis. This chain is Adenine phosphoribosyltransferase, found in Aliarcobacter butzleri (strain RM4018) (Arcobacter butzleri).